The sequence spans 325 residues: Biotin synthase (325 aa).

A Radical SAM core domain is found at 43-262; it reads CSVETAQLLS…VAVARLLMPR (220 aa). Cysteine 58, cysteine 62, and cysteine 65 together coordinate [4Fe-4S] cluster. Residues cysteine 102, cysteine 133, cysteine 193, and arginine 266 each contribute to the [2Fe-2S] cluster site.

It belongs to the radical SAM superfamily. Biotin synthase family. As to quaternary structure, homodimer. The cofactor is [4Fe-4S] cluster. Requires [2Fe-2S] cluster as cofactor.

It carries out the reaction (4R,5S)-dethiobiotin + (sulfur carrier)-SH + 2 reduced [2Fe-2S]-[ferredoxin] + 2 S-adenosyl-L-methionine = (sulfur carrier)-H + biotin + 2 5'-deoxyadenosine + 2 L-methionine + 2 oxidized [2Fe-2S]-[ferredoxin]. It functions in the pathway cofactor biosynthesis; biotin biosynthesis; biotin from 7,8-diaminononanoate: step 2/2. Catalyzes the conversion of dethiobiotin (DTB) to biotin by the insertion of a sulfur atom into dethiobiotin via a radical-based mechanism. The polypeptide is Biotin synthase (Azorhizobium caulinodans (strain ATCC 43989 / DSM 5975 / JCM 20966 / LMG 6465 / NBRC 14845 / NCIMB 13405 / ORS 571)).